The following is a 443-amino-acid chain: Threonine/serine transporter TdcC (443 aa).

11 helical membrane passes run 24–44, 45–65, 95–115, 140–160, 163–183, 207–227, 259–279, 319–339, 363–383, 385–405, and 423–443; these read WVLG…PISA, GIGG…IAFF, VGGV…LWIY, VVAL…KDLM, VMGY…LSLI, ILVT…FSPI, ASVL…FTLS, ASII…LGTL, LNMI…YINP, ILDL…CLLP, and SNYF…YQLM.

It belongs to the amino acid/polyamine transporter 2 family. SdaC/TdcC subfamily.

Its subcellular location is the cell inner membrane. The catalysed reaction is L-threonine(in) + H(+)(in) = L-threonine(out) + H(+)(out). It carries out the reaction L-serine(in) + H(+)(in) = L-serine(out) + H(+)(out). In terms of biological role, involved in the import of threonine and serine into the cell, with the concomitant import of a proton (symport system). The polypeptide is Threonine/serine transporter TdcC (Edwardsiella tarda).